The sequence spans 236 residues: Probable transcriptional regulatory protein FP0835 (236 aa).

The protein belongs to the TACO1 family.

It localises to the cytoplasm. In Flavobacterium psychrophilum (strain ATCC 49511 / DSM 21280 / CIP 103535 / JIP02/86), this protein is Probable transcriptional regulatory protein FP0835.